A 259-amino-acid chain; its full sequence is Probable UMP-CMP kinase 2 (259 aa).

63 to 68 (GSGKGT) provides a ligand contact to ATP. Residues 83 to 112 (SAGDLLRREIAMHTENGAMILNLIKDGKIV) are NMP. A ribonucleoside 5'-phosphate-binding positions include R89, 110-112 (KIV), and 137-140 (GFPR). N144 is a binding site for CMP. The segment at 175-183 (NRNQGRIDD) is LID. R176 contributes to the ATP binding site. R180 and R191 together coordinate a ribonucleoside 5'-phosphate. G219 is a binding site for ATP.

It belongs to the adenylate kinase family. UMP-CMP kinase subfamily. In terms of assembly, monomer. The cofactor is Mg(2+).

It is found in the cytoplasm. It localises to the nucleus. It catalyses the reaction CMP + ATP = CDP + ADP. It carries out the reaction dCMP + ATP = dCDP + ADP. The catalysed reaction is UMP + ATP = UDP + ADP. Functionally, catalyzes the phosphorylation of pyrimidine nucleoside monophosphates at the expense of ATP. Plays an important role in de novo pyrimidine nucleotide biosynthesis. Has preference for UMP and CMP as phosphate acceptors. The protein is Probable UMP-CMP kinase 2 (UMK2) of Arabidopsis thaliana (Mouse-ear cress).